Reading from the N-terminus, the 186-residue chain is ATP synthase subunit delta (186 aa).

Belongs to the ATPase delta chain family. In terms of assembly, F-type ATPases have 2 components, F(1) - the catalytic core - and F(0) - the membrane proton channel. F(1) has five subunits: alpha(3), beta(3), gamma(1), delta(1), epsilon(1). F(0) has three main subunits: a(1), b(2) and c(10-14). The alpha and beta chains form an alternating ring which encloses part of the gamma chain. F(1) is attached to F(0) by a central stalk formed by the gamma and epsilon chains, while a peripheral stalk is formed by the delta and b chains.

The protein resides in the cell inner membrane. Functionally, f(1)F(0) ATP synthase produces ATP from ADP in the presence of a proton or sodium gradient. F-type ATPases consist of two structural domains, F(1) containing the extramembraneous catalytic core and F(0) containing the membrane proton channel, linked together by a central stalk and a peripheral stalk. During catalysis, ATP synthesis in the catalytic domain of F(1) is coupled via a rotary mechanism of the central stalk subunits to proton translocation. In terms of biological role, this protein is part of the stalk that links CF(0) to CF(1). It either transmits conformational changes from CF(0) to CF(1) or is implicated in proton conduction. The protein is ATP synthase subunit delta of Brucella canis (strain ATCC 23365 / NCTC 10854 / RM-666).